Consider the following 188-residue polypeptide: Casparian strip membrane protein 1 (188 aa).

Residues 1-24 are Cytoplasmic-facing; sequence MKAGALELGHASKTTKSGVNRGMS. The helical transmembrane segment at 25 to 45 threads the bilayer; the sequence is ILDLFIRIIAIIATLGSAIAM. Residues 46 to 72 are Extracellular-facing; the sequence is GTTNETLPFFTQFVRFKAKYSDLPTFT. An N-linked (GlcNAc...) asparagine glycan is attached at Asn-49. The helical transmembrane segment at 73–93 threads the bilayer; that stretch reads FFVVANAIVSAYLVLSLGLSI. The Cytoplasmic segment spans residues 94–105; the sequence is YHIMRSRAQATR. A helical transmembrane segment spans residues 106 to 126; it reads IALIFFDAAMLGLLTGGASAS. Topologically, residues 127 to 159 are extracellular; that stretch reads AAIVYLAHKGNRKTNWFPICQQYDSFCHRTSGS. The chain crosses the membrane as a helical span at residues 160–180; the sequence is LVGSFAGSVLIILLIFLSAIA. The Cytoplasmic portion of the chain corresponds to 181 to 188; it reads LSRQSLNH.

The protein belongs to the Casparian strip membrane proteins (CASP) family. As to quaternary structure, homodimer and heterodimers.

The protein localises to the cell membrane. Functionally, regulates membrane-cell wall junctions and localized cell wall deposition. Required for establishment of the Casparian strip membrane domain (CSD) and the subsequent formation of Casparian strips, a cell wall modification of the root endodermis that determines an apoplastic barrier between the intraorganismal apoplasm and the extraorganismal apoplasm and prevents lateral diffusion. The protein is Casparian strip membrane protein 1 of Solanum tuberosum (Potato).